The chain runs to 293 residues: 4-hydroxy-tetrahydrodipicolinate synthase (293 aa).

Pyruvate is bound at residue Thr45. Residue Tyr133 is the Proton donor/acceptor of the active site. Lys161 (schiff-base intermediate with substrate) is an active-site residue. Ile203 lines the pyruvate pocket.

Belongs to the DapA family. Homotetramer; dimer of dimers.

Its subcellular location is the cytoplasm. It catalyses the reaction L-aspartate 4-semialdehyde + pyruvate = (2S,4S)-4-hydroxy-2,3,4,5-tetrahydrodipicolinate + H2O + H(+). The protein operates within amino-acid biosynthesis; L-lysine biosynthesis via DAP pathway; (S)-tetrahydrodipicolinate from L-aspartate: step 3/4. Its function is as follows. Catalyzes the condensation of (S)-aspartate-beta-semialdehyde [(S)-ASA] and pyruvate to 4-hydroxy-tetrahydrodipicolinate (HTPA). This is 4-hydroxy-tetrahydrodipicolinate synthase from Pseudoalteromonas atlantica (strain T6c / ATCC BAA-1087).